The sequence spans 133 residues: MSWQAYVDEHLMCDIEGTGHHLTSAAILGHDGTVWAQSSNFPQFKPEEMKGIITEFDQAGTLAPTGMFIAGAKYMVLQGEQGAVIRGKKGAGGICIKKTGQALVMGIYDEPVAPGQCNMVVERLGDYLIDQGM.

It belongs to the profilin family. In terms of assembly, occurs in many kinds of cells as a complex with monomeric actin in a 1:1 ratio.

It localises to the cytoplasm. It is found in the cytoskeleton. Its function is as follows. Binds to actin and affects the structure of the cytoskeleton. At high concentrations, profilin prevents the polymerization of actin, whereas it enhances it at low concentrations. By binding to PIP2, it inhibits the formation of IP3 and DG. The protein is Profilin-3 of Ambrosia artemisiifolia (Common ragweed).